Consider the following 428-residue polypeptide: Light-independent protochlorophyllide reductase subunit N (428 aa).

[4Fe-4S] cluster contacts are provided by Cys-31, Cys-56, and Cys-117.

The protein belongs to the BchN/ChlN family. In terms of assembly, protochlorophyllide reductase is composed of three subunits; BchL, BchN and BchB. Forms a heterotetramer of two BchB and two BchN subunits. Requires [4Fe-4S] cluster as cofactor.

The catalysed reaction is chlorophyllide a + oxidized 2[4Fe-4S]-[ferredoxin] + 2 ADP + 2 phosphate = protochlorophyllide a + reduced 2[4Fe-4S]-[ferredoxin] + 2 ATP + 2 H2O. It functions in the pathway porphyrin-containing compound metabolism; bacteriochlorophyll biosynthesis (light-independent). Functionally, component of the dark-operative protochlorophyllide reductase (DPOR) that uses Mg-ATP and reduced ferredoxin to reduce ring D of protochlorophyllide (Pchlide) to form chlorophyllide a (Chlide). This reaction is light-independent. The NB-protein (BchN-BchB) is the catalytic component of the complex. This chain is Light-independent protochlorophyllide reductase subunit N, found in Rhodopseudomonas palustris (strain HaA2).